We begin with the raw amino-acid sequence, 209 residues long: Putative 3-methyladenine DNA glycosylase (209 aa).

It belongs to the DNA glycosylase MPG family.

This Deinococcus geothermalis (strain DSM 11300 / CIP 105573 / AG-3a) protein is Putative 3-methyladenine DNA glycosylase.